We begin with the raw amino-acid sequence, 238 residues long: Ribosomal RNA small subunit methyltransferase G (238 aa).

S-adenosyl-L-methionine is bound by residues Gly75, Leu80, 126–127 (AE), and Arg142.

Belongs to the methyltransferase superfamily. RNA methyltransferase RsmG family.

The protein localises to the cytoplasm. Specifically methylates the N7 position of guanine in position 518 of 16S rRNA. This is Ribosomal RNA small subunit methyltransferase G from Streptomyces avermitilis (strain ATCC 31267 / DSM 46492 / JCM 5070 / NBRC 14893 / NCIMB 12804 / NRRL 8165 / MA-4680).